A 178-amino-acid chain; its full sequence is Large ribosomal subunit protein uL6 (178 aa).

Belongs to the universal ribosomal protein uL6 family. Part of the 50S ribosomal subunit.

Functionally, this protein binds to the 23S rRNA, and is important in its secondary structure. It is located near the subunit interface in the base of the L7/L12 stalk, and near the tRNA binding site of the peptidyltransferase center. This Helicobacter pylori (strain G27) protein is Large ribosomal subunit protein uL6.